Here is a 152-residue protein sequence, read N- to C-terminus: Endoribonuclease YbeY (152 aa).

Residues His111, His115, and His121 each contribute to the Zn(2+) site.

This sequence belongs to the endoribonuclease YbeY family. The cofactor is Zn(2+).

Its subcellular location is the cytoplasm. Its function is as follows. Single strand-specific metallo-endoribonuclease involved in late-stage 70S ribosome quality control and in maturation of the 3' terminus of the 16S rRNA. This Pseudomonas fluorescens (strain ATCC BAA-477 / NRRL B-23932 / Pf-5) protein is Endoribonuclease YbeY.